Consider the following 58-residue polypeptide: Large ribosomal subunit protein eL37 (58 aa).

Positions 1 to 17 are enriched in polar residues; it reads MTGAGTPSQGKKNTTTH. The disordered stretch occupies residues 1–26; the sequence is MTGAGTPSQGKKNTTTHTKCRRCGEK. Zn(2+) is bound by residues cysteine 20, cysteine 23, cysteine 35, and cysteine 38. The C4-type zinc-finger motif lies at 20–38; the sequence is CRRCGEKSYHTKKKVCSSC.

This sequence belongs to the eukaryotic ribosomal protein eL37 family. Zn(2+) is required as a cofactor.

Its function is as follows. Binds to the 23S rRNA. This is Large ribosomal subunit protein eL37 from Halobacterium salinarum (strain ATCC 29341 / DSM 671 / R1).